Consider the following 412-residue polypeptide: MNDLIINHIAELILPRSTDKPLKGKELDELNVVKNGTVVIKDGKIVYAGTHTDDYDATETIDASGKVVSPALVDAHTHLTFGGSREHEMSLKRQGKSYLEILEMGGGILSTVNATRETSEDDLFKKAEHDLLTMIKHGVLAVESKSGYGLDRENELKQLKVSNRLAEKYDLDMKHTFLGPHAVPKEASSNEAFLEEMIALLPEVKQYADFADIFCETGVFTIEQSQHYMQKAKEAGFKVKIHADEIDPLGGLELAIDEQAISADHLVASSDKGKEKLRNSDTVAVLLPATTFYLGKEDYADARGMLDNNGAIALATDYNPGSSVTNNLQLVMAIAALKLKLSPNEVWNAVTVNAAKAIDINAGTINTGDKANLVIWDAPNHEYIPYHFGINHAEKVIKDGKVIVDNTLSFKA.

H76 and H78 together coordinate Fe(3+). Residues H76 and H78 each coordinate Zn(2+). Residues R85, Y148, and H181 each contribute to the 4-imidazolone-5-propanoate site. Residue Y148 participates in N-formimidoyl-L-glutamate binding. H242 contacts Fe(3+). Position 242 (H242) interacts with Zn(2+). E245 provides a ligand contact to 4-imidazolone-5-propanoate. Fe(3+) is bound at residue D317. D317 provides a ligand contact to Zn(2+). Positions 319 and 321 each coordinate N-formimidoyl-L-glutamate. S322 serves as a coordination point for 4-imidazolone-5-propanoate.

This sequence belongs to the metallo-dependent hydrolases superfamily. HutI family. Requires Zn(2+) as cofactor. It depends on Fe(3+) as a cofactor.

The protein resides in the cytoplasm. The enzyme catalyses 4-imidazolone-5-propanoate + H2O = N-formimidoyl-L-glutamate. The protein operates within amino-acid degradation; L-histidine degradation into L-glutamate; N-formimidoyl-L-glutamate from L-histidine: step 3/3. Catalyzes the hydrolytic cleavage of the carbon-nitrogen bond in imidazolone-5-propanoate to yield N-formimidoyl-L-glutamate. It is the third step in the universal histidine degradation pathway. The polypeptide is Imidazolonepropionase (Staphylococcus aureus (strain MSSA476)).